The chain runs to 431 residues: Tryptophan synthase beta chain (431 aa).

An N6-(pyridoxal phosphate)lysine modification is found at Lys109.

Belongs to the TrpB family. In terms of assembly, tetramer of two alpha and two beta chains. Pyridoxal 5'-phosphate serves as cofactor.

The catalysed reaction is (1S,2R)-1-C-(indol-3-yl)glycerol 3-phosphate + L-serine = D-glyceraldehyde 3-phosphate + L-tryptophan + H2O. The protein operates within amino-acid biosynthesis; L-tryptophan biosynthesis; L-tryptophan from chorismate: step 5/5. Its function is as follows. The beta subunit is responsible for the synthesis of L-tryptophan from indole and L-serine. This is Tryptophan synthase beta chain from Deinococcus radiodurans (strain ATCC 13939 / DSM 20539 / JCM 16871 / CCUG 27074 / LMG 4051 / NBRC 15346 / NCIMB 9279 / VKM B-1422 / R1).